Here is an 89-residue protein sequence, read N- to C-terminus: Class I hydrophobin D (89 aa).

Residues M1–A16 form the signal peptide. 4 cysteine pairs are disulfide-bonded: C28-C68, C39-C60, C40-C52, and C69-C85. A glycan (N-linked (GlcNAc...) asparagine) is linked at N36.

The protein belongs to the fungal hydrophobin family.

It localises to the secreted. The protein resides in the cell wall. Its subcellular location is the vacuole. It is found in the cytoplasmic vesicle. Functionally, aerial growth, conidiation, and dispersal of filamentous fungi in the environment rely upon a capability of their secreting small amphipathic proteins called hydrophobins (HPBs) with low sequence identity. Class I can self-assemble into an outermost layer of rodlet bundles on aerial cell surfaces, conferring cellular hydrophobicity that supports fungal growth, development and dispersal; whereas Class II form highly ordered films at water-air interfaces through intermolecular interactions but contribute nothing to the rodlet structure. Hyd1D contributes to certain cell wall-related features, such as hydrophobicity but is not involved in cell wall-related events during fungal proliferation in host hemocoel. Does not contribute to conidial hydrophobicity. Involved in insect hemocoel colonization independent of cell hydrophobicity. The chain is Class I hydrophobin D from Beauveria bassiana (strain ARSEF 2860) (White muscardine disease fungus).